The chain runs to 934 residues: Coiled-coil domain-containing protein 39 (934 aa).

Coiled-coil stretches lie at residues 17-133 (IPVA…DGLK), 164-512 (SQQD…HNDL), 540-615 (VDRS…SQIR), and 664-826 (VIKA…EQDI). The tract at residues 866–934 (LPTAKGPSSR…NIPKGKKLNK (69 aa)) is disordered. Low complexity predominate over residues 873–892 (SSRSSSQSSLSSIRSLEDSI). Phosphoserine is present on residues Ser887 and Ser895. Positions 912–925 (RSDSSRSSSGSNSN) are enriched in low complexity.

It belongs to the CCDC39 family.

The protein localises to the cytoplasm. Its subcellular location is the cytoskeleton. It localises to the cilium axoneme. Functionally, required for assembly of dynein regulatory complex (DRC) and inner dynein arm (IDA) complexes, which are responsible for ciliary beat regulation, thereby playing a central role in motility in cilia and flagella. Probably acts together with CCDC40 to form a molecular ruler that determines the 96 nanometer (nm) repeat length and arrangements of components in cilia and flagella. Not required for outer dynein arm complexes assembly. This is Coiled-coil domain-containing protein 39 (Ccdc39) from Rattus norvegicus (Rat).